The sequence spans 168 residues: Transmembrane protein 229b (168 aa).

Over 1-14 (MAPPEPLTALSRWY) the chain is Cytoplasmic. A helical transmembrane segment spans residues 15–35 (LYAIHGYFCEVMFTAAWDFVV). Residues 36-40 (NYNWK) lie on the Extracellular side of the membrane. The chain crosses the membrane as a helical span at residues 41-61 (FPGVTSVWALFIYGTSILIVE). Topologically, residues 62 to 72 (KMYLYLKDKCN) are cytoplasmic. The helical transmembrane segment at 73 to 93 (ILIRCLIYTLWTYIWEFSTGL) threads the bilayer. At 94–109 (ILRQFNACPWDYSQFD) the chain is on the extracellular side. A helical transmembrane segment spans residues 110–130 (FDFMGLITLEYAIPWFCASFI). Residues 131–168 (MEQLVIRNTLRLRFDEHAEPGSPVMSTVSMANGHVKCN) are Cytoplasmic-facing.

The protein belongs to the TMEM229 family.

The protein resides in the membrane. The protein is Transmembrane protein 229b (tmem229b) of Xenopus tropicalis (Western clawed frog).